The primary structure comprises 282 residues: Bis(5'-nucleosyl)-tetraphosphatase, symmetrical (282 aa).

The protein belongs to the Ap4A hydrolase family.

The enzyme catalyses P(1),P(4)-bis(5'-adenosyl) tetraphosphate + H2O = 2 ADP + 2 H(+). In terms of biological role, hydrolyzes diadenosine 5',5'''-P1,P4-tetraphosphate to yield ADP. The sequence is that of Bis(5'-nucleosyl)-tetraphosphatase, symmetrical from Salmonella agona (strain SL483).